Consider the following 510-residue polypeptide: Thermostable carboxypeptidase 1 (510 aa).

A Peptidase M32 domain is found at 3 to 506; the sequence is PEAAYQNLLE…FLAYLEKKYA (504 aa). Positions 245–247 match the HPF motif; the sequence is HPF. The DXRXT motif lies at 255-259; that stretch reads DVRIT. Residue H276 participates in Zn(2+) binding. The HEXXH motif lies at 276–280; sequence HEMGH. The Proton donor/acceptor role is filled by E277. The Zn(2+) site is built by H280 and E306. Residues 305–308 carry the HES/GQ motif; sequence HESQ. Positions 357-362 match the I/NRXXA/SD motif; it reads IRVEAD. Positions 412 to 419 match the GXXQDXHW motif; sequence GVMQDVHW.

The protein belongs to the peptidase M32 family. In terms of assembly, homodimer. The cofactor is Zn(2+).

It carries out the reaction Release of a C-terminal amino acid with broad specificity, except for -Pro.. Its function is as follows. Broad specificity carboxypetidase that releases amino acids sequentially from the C-terminus, including neutral, aromatic, polar and basic residues, but not Pro. Has lower activity with substrates ending with Gly or Glu. The protein is Thermostable carboxypeptidase 1 of Thermus thermophilus (strain ATCC 27634 / DSM 579 / HB8).